The sequence spans 265 residues: Undecaprenyl-diphosphatase (265 aa).

The next 8 helical transmembrane spans lie at 7–27, 45–65, 86–106, 108–128, 145–165, 186–206, 214–234, and 245–265; these read IIVS…PISS, TKIL…YFFH, LHII…YKKI, LLFN…FLLI, ISLL…YPGF, IEFS…YDFI, ILDL…SILC, and TSLI…YFIN.

It belongs to the UppP family.

The protein localises to the cell membrane. It catalyses the reaction di-trans,octa-cis-undecaprenyl diphosphate + H2O = di-trans,octa-cis-undecaprenyl phosphate + phosphate + H(+). Its function is as follows. Catalyzes the dephosphorylation of undecaprenyl diphosphate (UPP). Confers resistance to bacitracin. The chain is Undecaprenyl-diphosphatase from Buchnera aphidicola subsp. Acyrthosiphon pisum (strain Tuc7).